Here is a 535-residue protein sequence, read N- to C-terminus: Protein translocase subunit SecD (535 aa).

The next 6 helical transmembrane spans lie at 5–25 (LTWK…GIIG), 377–397 (AIIG…GAGI), 402–421 (SLLL…GAVL), 425–444 (GIAG…VLIF), 469–489 (WLTI…LFLF), and 496–516 (GFAV…VFVS).

This sequence belongs to the SecD/SecF family. SecD subfamily. Forms a complex with SecF. Part of the essential Sec protein translocation apparatus which comprises SecA, SecYEG and auxiliary proteins SecDF. Other proteins may also be involved.

Its subcellular location is the cell inner membrane. Functionally, part of the Sec protein translocase complex. Interacts with the SecYEG preprotein conducting channel. SecDF uses the proton motive force (PMF) to complete protein translocation after the ATP-dependent function of SecA. In Koribacter versatilis (strain Ellin345), this protein is Protein translocase subunit SecD.